The sequence spans 546 residues: Probable malate:quinone oxidoreductase (546 aa).

Belongs to the MQO family. It depends on FAD as a cofactor.

It carries out the reaction (S)-malate + a quinone = a quinol + oxaloacetate. It functions in the pathway carbohydrate metabolism; tricarboxylic acid cycle; oxaloacetate from (S)-malate (quinone route): step 1/1. The polypeptide is Probable malate:quinone oxidoreductase (Acinetobacter baumannii (strain AB0057)).